The primary structure comprises 339 residues: Ribosome biogenesis protein BRX1 homolog (339 aa).

The segment at 1–34 (MSAYKRKRGSLPEVATNTKKAKKQLAGSEQEATA) is disordered. Residues 53–242 (ERVLIFSSRG…LIKIFKGSFG (190 aa)) enclose the Brix domain. Positions 304 to 339 (AEEKPQVIETEPPAPKPKMKRKDKQFKRQRMAKKRM) are disordered. Positions 320–339 (PKMKRKDKQFKRQRMAKKRM) are enriched in basic residues.

It belongs to the BRX1 family. As to expression, ubiquitous.

It is found in the nucleus. Its subcellular location is the nucleolus. In terms of biological role, required for biogenesis of the 60S ribosomal subunit. The chain is Ribosome biogenesis protein BRX1 homolog (brix1) from Xenopus laevis (African clawed frog).